A 134-amino-acid chain; its full sequence is Gastrin-releasing peptide (134 aa).

Residues 1–23 form the signal peptide; it reads MRGREVPLVLLALVLCLAPRGWA. Residue M50 is modified to Methionine amide. The propeptide occupies 54–134; the sequence is SVAESPQLHE…QHEGRNPQLN (81 aa). Residues 95-134 are disordered; sequence GHQMPPWEPLSIHQPAWDSEDVSNFKDTGPQHEGRNPQLN. Basic and acidic residues predominate over residues 123-134; the sequence is GPQHEGRNPQLN.

The protein belongs to the bombesin/neuromedin-B/ranatensin family. As to expression, detected in adrenal medulla (at protein level).

It localises to the cytoplasmic vesicle. It is found in the secretory vesicle lumen. Its subcellular location is the secreted. The protein localises to the cell projection. The protein resides in the neuron projection. Stimulates the release of gastrin and other gastrointestinal hormones. Contributes to the perception of prurient stimuli and to the transmission of itch signals in the spinal cord that promote scratching behavior. Contributes primarily to nonhistaminergic itch sensation. In one study, shown to act in the amygdala as part of an inhibitory network which inhibits memory specifically related to learned fear. In another study, shown to act on vasoactive intestinal peptide (VIP)-expressing cells in the auditory cortex, most likely via extrasynaptic diffusion from local and long-range sources, to mediate disinhibition of glutamatergic cells via VIP cell-specific GRPR signaling which leads to enhanced auditory fear memories. Contributes to the regulation of food intake. Inhibits voltage-gated sodium channels but enhances voltage-gated potassium channels in hippocampal neurons. Induces sighing by acting directly on the pre-Botzinger complex, a cluster of several thousand neurons in the ventrolateral medulla responsible for inspiration during respiratory activity. Functionally, induces an itch response through activation of receptors present on mast cells, triggering mast cell degranulation. The protein is Gastrin-releasing peptide (GRP) of Bos taurus (Bovine).